Here is a 320-residue protein sequence, read N- to C-terminus: Ferrochelatase (320 aa).

Fe cation contacts are provided by histidine 194 and glutamate 275.

Belongs to the ferrochelatase family. As to quaternary structure, monomer.

Its subcellular location is the cytoplasm. The enzyme catalyses heme b + 2 H(+) = protoporphyrin IX + Fe(2+). It participates in porphyrin-containing compound metabolism; protoheme biosynthesis; protoheme from protoporphyrin-IX: step 1/1. In terms of biological role, catalyzes the ferrous insertion into protoporphyrin IX. In Salmonella dublin (strain CT_02021853), this protein is Ferrochelatase.